A 166-amino-acid chain; its full sequence is Specificity protein transcription factor 2 (166 aa).

Residues 17–45 (SYHHSLPSISPPDSPASTSASSSSSSIGA) are disordered. Residues 31-42 (PASTSASSSSSS) are compositionally biased toward low complexity. 3 C2H2-type zinc fingers span residues 77–101 (HLCS…LRKH), 107–131 (FVCD…KRTH), and 137–160 (FACK…TSVH).

Belongs to the Sp1 C2H2-type zinc-finger protein family.

Transcription factor. Probably acts downstream of the Wnt signaling pathway. The sequence is that of Specificity protein transcription factor 2 from Caenorhabditis elegans.